The following is a 538-amino-acid chain: Putative outer membrane porin BglH (538 aa).

The N-terminal stretch at 1-25 (MFRRNLITSAILLMAPLAFSAQSLA) is a signal peptide. A disordered region spans residues 52–82 (KDEEKKKYTPATVNRSVSTNDQGYAANPFPT). Positions 62–73 (ATVNRSVSTNDQ) are enriched in polar residues.

This sequence belongs to the porin LamB (TC 1.B.3) family.

The protein resides in the cell outer membrane. In terms of biological role, may be a sugar porin with a broad carbohydrate specificity. The protein is Putative outer membrane porin BglH (bglH) of Shigella flexneri serotype 5b (strain 8401).